The primary structure comprises 103 residues: MYAVIQSGGKQHRVAVEQTLRLEKLDVEAGETIEFDKVLLVANAEDVKVGIPYVEGSKVTAEVVAHGRGNKIKIVKFRRRKHSRTTAGHRQWFTEVKITAINA.

Belongs to the bacterial ribosomal protein bL21 family. As to quaternary structure, part of the 50S ribosomal subunit. Contacts protein L20.

In terms of biological role, this protein binds to 23S rRNA in the presence of protein L20. The protein is Large ribosomal subunit protein bL21 of Psychromonas ingrahamii (strain DSM 17664 / CCUG 51855 / 37).